A 427-amino-acid chain; its full sequence is Trigger factor (427 aa).

One can recognise a PPIase FKBP-type domain in the interval 163–248 (GDTVVIDFVG…IHEVKAKEVP (86 aa)).

Belongs to the FKBP-type PPIase family. Tig subfamily.

The protein resides in the cytoplasm. It carries out the reaction [protein]-peptidylproline (omega=180) = [protein]-peptidylproline (omega=0). In terms of biological role, involved in protein export. Acts as a chaperone by maintaining the newly synthesized protein in an open conformation. Functions as a peptidyl-prolyl cis-trans isomerase. This Streptococcus pneumoniae serotype 4 (strain ATCC BAA-334 / TIGR4) protein is Trigger factor.